The sequence spans 73 residues: Large ribosomal subunit protein bL31 (73 aa).

Cys-16, Cys-18, Cys-37, and Cys-40 together coordinate Zn(2+).

This sequence belongs to the bacterial ribosomal protein bL31 family. Type A subfamily. In terms of assembly, part of the 50S ribosomal subunit. The cofactor is Zn(2+).

Functionally, binds the 23S rRNA. This chain is Large ribosomal subunit protein bL31, found in Blochmanniella floridana.